Here is a 365-residue protein sequence, read N- to C-terminus: Flagellar P-ring protein (365 aa).

The N-terminal stretch at 1-20 is a signal peptide; that stretch reads MKLPHFFVLAALVLSGAAHA.

It belongs to the FlgI family. As to quaternary structure, the basal body constitutes a major portion of the flagellar organelle and consists of four rings (L,P,S, and M) mounted on a central rod.

The protein localises to the periplasm. Its subcellular location is the bacterial flagellum basal body. Its function is as follows. Assembles around the rod to form the L-ring and probably protects the motor/basal body from shearing forces during rotation. The chain is Flagellar P-ring protein from Thiobacillus denitrificans (strain ATCC 25259 / T1).